The primary structure comprises 443 residues: MLPVIAIVGRPNVGKSTLFNYLTKSRAALVADVPGVTRDRQYGETTIDSQRLLLVDTGGLVDTENKEVAPLAETQVEQAIDESDCILFLVDAKAGLVPADEIIAERLRKKGKKIFLAVNKADRARAAVVQSDFYKLGFGEPYVIAAASGRGVKDLMTQVLENLPEEKEVIEKEVGIKIAMIGRPNVGKSTLINRLLGEERVIVYDQPGTTRDSIYIPFARNDENYTLIDTAGIRRRAKIQDYVEKFSMIKSLQAMHAADVVIFLLDARQGVTEQDLRLLNRIVEAGVSLIIAVNKWDGLNIEERDNVRNAIDRRMPFVDFARRYFISALHGTGVGKLFRAIQESYQSIQQELTTGQLTRALEKAVAEHEPPLVKGRRIRLRYAHLGARHPLTIVVHGKQTKSLPQSYSRYLANYFRKTFNFIGVPVHIKLKTDPNPYEGQEER.

EngA-type G domains are found at residues 3–167 and 176–349; these read PVIA…PEEK and IKIA…QSIQ. Residues 9 to 16, 56 to 60, 119 to 122, 182 to 189, 229 to 233, and 294 to 297 contribute to the GTP site; these read GRPNVGKS, DTGGL, NKAD, DTAGI, and NKWD. Residues 350-434 enclose the KH-like domain; sequence QELTTGQLTR…PVHIKLKTDP (85 aa).

Belongs to the TRAFAC class TrmE-Era-EngA-EngB-Septin-like GTPase superfamily. EngA (Der) GTPase family. In terms of assembly, associates with the 50S ribosomal subunit.

GTPase that plays an essential role in the late steps of ribosome biogenesis. The protein is GTPase Der of Coxiella burnetii (strain CbuK_Q154) (Coxiella burnetii (strain Q154)).